The following is a 146-amino-acid chain: Ribonuclease P protein component (146 aa).

It belongs to the RnpA family. As to quaternary structure, consists of a catalytic RNA component (M1 or rnpB) and a protein subunit.

The catalysed reaction is Endonucleolytic cleavage of RNA, removing 5'-extranucleotides from tRNA precursor.. Functionally, RNaseP catalyzes the removal of the 5'-leader sequence from pre-tRNA to produce the mature 5'-terminus. It can also cleave other RNA substrates such as 4.5S RNA. The protein component plays an auxiliary but essential role in vivo by binding to the 5'-leader sequence and broadening the substrate specificity of the ribozyme. The polypeptide is Ribonuclease P protein component (Chlorobium phaeobacteroides (strain DSM 266 / SMG 266 / 2430)).